The sequence spans 138 residues: Translation initiation factor 2 subunit beta (138 aa).

It belongs to the eIF-2-beta/eIF-5 family. Heterotrimer composed of an alpha, a beta and a gamma chain.

Its function is as follows. eIF-2 functions in the early steps of protein synthesis by forming a ternary complex with GTP and initiator tRNA. In Methanococcus vannielii (strain ATCC 35089 / DSM 1224 / JCM 13029 / OCM 148 / SB), this protein is Translation initiation factor 2 subunit beta.